Here is a 268-residue protein sequence, read N- to C-terminus: Tryptophan synthase alpha chain (268 aa).

Catalysis depends on proton acceptor residues Glu-40 and Asp-51.

The protein belongs to the TrpA family. In terms of assembly, tetramer of two alpha and two beta chains.

It carries out the reaction (1S,2R)-1-C-(indol-3-yl)glycerol 3-phosphate + L-serine = D-glyceraldehyde 3-phosphate + L-tryptophan + H2O. It functions in the pathway amino-acid biosynthesis; L-tryptophan biosynthesis; L-tryptophan from chorismate: step 5/5. The alpha subunit is responsible for the aldol cleavage of indoleglycerol phosphate to indole and glyceraldehyde 3-phosphate. The chain is Tryptophan synthase alpha chain from Geobacillus thermodenitrificans (strain NG80-2).